Here is a 198-residue protein sequence, read N- to C-terminus: Probable GTP-binding protein EngB (198 aa).

An EngB-type G domain is found at 22-195 (GHPEIAFLGR…WSWLEQTAGL (174 aa)). GTP contacts are provided by residues 30 to 37 (GRSNVGKS), 57 to 61 (GKTQT), 75 to 78 (DVPG), 142 to 145 (TKID), and 174 to 176 (FSA). The Mg(2+) site is built by Ser37 and Thr59.

It belongs to the TRAFAC class TrmE-Era-EngA-EngB-Septin-like GTPase superfamily. EngB GTPase family. It depends on Mg(2+) as a cofactor.

In terms of biological role, necessary for normal cell division and for the maintenance of normal septation. In Lacticaseibacillus paracasei (strain ATCC 334 / BCRC 17002 / CCUG 31169 / CIP 107868 / KCTC 3260 / NRRL B-441) (Lactobacillus paracasei), this protein is Probable GTP-binding protein EngB.